The sequence spans 308 residues: Cell division protein FtsQ (308 aa).

Residues 1 to 28 (MQSLSFPPNRRTPRLAPPRRETGRRDPA) form a disordered region. Over 1-46 (MQSLSFPPNRRTPRLAPPRRETGRRDPAPSRWAYRAQRLWLTPMFR) the chain is Cytoplasmic. Residues 18–28 (PRRETGRRDPA) are compositionally biased toward basic and acidic residues. Residues 47 to 67 (TALRVGLPIVGVLLVVALIFA) form a helical membrane-spanning segment. The Periplasmic portion of the chain corresponds to 68-308 (SADRRAAMAG…RGIDTSGSDL (241 aa)). One can recognise a POTRA domain in the interval 92–160 (FMVTLLSVDG…GLLEVRVTER (69 aa)).

The protein belongs to the FtsQ/DivIB family. FtsQ subfamily.

It localises to the cell inner membrane. Functionally, essential cell division protein. This chain is Cell division protein FtsQ, found in Cereibacter sphaeroides (strain ATCC 17023 / DSM 158 / JCM 6121 / CCUG 31486 / LMG 2827 / NBRC 12203 / NCIMB 8253 / ATH 2.4.1.) (Rhodobacter sphaeroides).